Here is a 505-residue protein sequence, read N- to C-terminus: Maturase K (505 aa).

The protein belongs to the intron maturase 2 family. MatK subfamily.

Its subcellular location is the plastid. The protein localises to the chloroplast. Usually encoded in the trnK tRNA gene intron. Probably assists in splicing its own and other chloroplast group II introns. This Nuphar variegata (Yellow pond lily) protein is Maturase K.